The following is a 358-amino-acid chain: Biotin synthase (358 aa).

In terms of domain architecture, Radical SAM core spans 50–277; sequence NEVQVSTLCS…KSHVRLSAGR (228 aa). Cys-65, Cys-69, and Cys-72 together coordinate [4Fe-4S] cluster. Residues Cys-109, Cys-140, Cys-200, and Arg-272 each coordinate [2Fe-2S] cluster.

The protein belongs to the radical SAM superfamily. Biotin synthase family. In terms of assembly, homodimer. [4Fe-4S] cluster serves as cofactor. The cofactor is [2Fe-2S] cluster.

The catalysed reaction is (4R,5S)-dethiobiotin + (sulfur carrier)-SH + 2 reduced [2Fe-2S]-[ferredoxin] + 2 S-adenosyl-L-methionine = (sulfur carrier)-H + biotin + 2 5'-deoxyadenosine + 2 L-methionine + 2 oxidized [2Fe-2S]-[ferredoxin]. The protein operates within cofactor biosynthesis; biotin biosynthesis; biotin from 7,8-diaminononanoate: step 2/2. Catalyzes the conversion of dethiobiotin (DTB) to biotin by the insertion of a sulfur atom into dethiobiotin via a radical-based mechanism. This chain is Biotin synthase, found in Cellvibrio japonicus (strain Ueda107) (Pseudomonas fluorescens subsp. cellulosa).